Here is a 262-residue protein sequence, read N- to C-terminus: MEKKITPSELELNEFIKIINEMSGIDLTDKKNILALKLNKFLEGTNTKNFSEFLGKLKSNRQLKQETLDFVTIGETYFLRELAQLKEIIYYAKSLEKRVNILSAPCSSGEEVYSLALLAAQNFIKDMYILGIDINSSVIEKAKLGKYQGRTLQRLSESEKRRFFLESEDKFYTINKNELCTCKFELCNVFEEKFSRLGKFDIIASRNMIIYFDHESKLKLMERFHRILNDKGRLYVGNADLIPETIYFKKIFSPRGVYYEKV.

Residues 1–262 enclose the CheR-type methyltransferase domain; the sequence is MEKKITPSEL…SPRGVYYEKV (262 aa). S-adenosyl-L-methionine contacts are provided by residues T76, R80, E111, D133, 188-189, and 206-207; these read NV and RN.

The enzyme catalyses L-glutamyl-[protein] + S-adenosyl-L-methionine = [protein]-L-glutamate 5-O-methyl ester + S-adenosyl-L-homocysteine. Methylation of the membrane-bound methyl-accepting chemotaxis proteins (MCP) to form gamma-glutamyl methyl ester residues in MCP. The chain is Chemotaxis protein methyltransferase (cheR) from Campylobacter jejuni subsp. jejuni serotype O:23/36 (strain 81-176).